The primary structure comprises 202 residues: ATP synthase subunit b (202 aa).

Residues 9 to 29 (TTLSLCLAVCVVVIAVGTGWA) traverse the membrane as a helical segment.

The protein belongs to the ATPase B chain family. In terms of assembly, F-type ATPases have 2 components, F(1) - the catalytic core - and F(0) - the membrane proton channel. F(1) has five subunits: alpha(3), beta(3), gamma(1), delta(1), epsilon(1). F(0) has three main subunits: a(1), b(2) and c(10-14). The alpha and beta chains form an alternating ring which encloses part of the gamma chain. F(1) is attached to F(0) by a central stalk formed by the gamma and epsilon chains, while a peripheral stalk is formed by the delta and b chains.

It is found in the cell inner membrane. In terms of biological role, f(1)F(0) ATP synthase produces ATP from ADP in the presence of a proton or sodium gradient. F-type ATPases consist of two structural domains, F(1) containing the extramembraneous catalytic core and F(0) containing the membrane proton channel, linked together by a central stalk and a peripheral stalk. During catalysis, ATP synthesis in the catalytic domain of F(1) is coupled via a rotary mechanism of the central stalk subunits to proton translocation. Component of the F(0) channel, it forms part of the peripheral stalk, linking F(1) to F(0). The protein is ATP synthase subunit b of Pelobacter propionicus (strain DSM 2379 / NBRC 103807 / OttBd1).